Consider the following 244-residue polypeptide: Ubiquitin carboxyl-terminal hydrolase mug105 (244 aa).

The active-site Nucleophile is the cysteine 42. Histidine 165 acts as the Proton acceptor in catalysis. Residue aspartate 183 is part of the active site.

It belongs to the peptidase C78 family. ZUFSP subfamily.

The protein localises to the cytoplasm. It catalyses the reaction Thiol-dependent hydrolysis of ester, thioester, amide, peptide and isopeptide bonds formed by the C-terminal Gly of ubiquitin (a 76-residue protein attached to proteins as an intracellular targeting signal).. In terms of biological role, deubiquitinase with endodeubiquitinase activity that preferentially cleaves 'Lys-48'-linked polyubiquitin chains. Shows only weak activity against 'Lys-63' and 'Lys-11'-linked chains. Has a role in meiosis. This Schizosaccharomyces pombe (strain 972 / ATCC 24843) (Fission yeast) protein is Ubiquitin carboxyl-terminal hydrolase mug105 (mug105).